Here is a 259-residue protein sequence, read N- to C-terminus: MAAAEQKGKKPRTDGAEAEPVDAALLQSIEKLQEIQDEIEKVNEEACDKVLELEQKYNEVRRPVYVRRNKIIKQIPDFWLTAFLSHPMLGELLTEDDQKIFKHLESIDVDDSEDIKSGYSITLTFSPNPYFEDTKLTKTYSFSDDEAVKVKATSIRWKKGMDIANDRAYTKKGDKRILIDESFFTWFNSEKNRSFAHGAMDEVADVIKEDLWPNPLKYFNNEFEEELELLDDDDEVSDDDDEEEDDEDQGEGEEDGEEN.

Residues 1 to 15 (MAAAEQKGKKPRTDG) are compositionally biased toward basic and acidic residues. The interval 1–20 (MAAAEQKGKKPRTDGAEAEP) is disordered. Positions 21-62 (VDAALLQSIEKLQEIQDEIEKVNEEACDKVLELEQKYNEVRR) form a coiled coil. The interval 228–259 (ELLDDDDEVSDDDDEEEDDEDQGEGEEDGEEN) is disordered.

It belongs to the nucleosome assembly protein (NAP) family.

It is found in the nucleus. The protein localises to the cytoplasm. In terms of biological role, acts as a histone H2A/H2B chaperone in nucleosome assembly. In Oryza sativa subsp. indica (Rice), this protein is NAP1-related protein 1.